Consider the following 331-residue polypeptide: Dof zinc finger protein DOF1.1 (331 aa).

The Dof-type zinc-finger motif lies at 77–131; sequence LKCPRCDSSNTKFCYYNNYNLTQPRHFCKGCRRYWTQGGALRNVPVGGGCRRNNK. Positions 79, 82, 104, and 107 each coordinate Zn(2+). Disordered regions lie at residues 121–166 and 291–331; these read PVGG…TNHQ and EEQP…NDLL. The segment covering 135-160 has biased composition (low complexity); that stretch reads NGNLKSSSSSSKQSSSVNAQSPSSGQ. A compositionally biased stretch (polar residues) spans 305 to 316; it reads GLTSPGNQTNQY.

In terms of assembly, interacts with OBF4. Expressed in the vasculature (mainly in the phloem and associated cell files) of cotyledons, leaves, roots, flower stalks and petals. The PEAR proteins (e.g. DOF2.4, DOF5.1, DOF3.2, DOF1.1, DOF5.6 and DOF5.3) form a short-range concentration gradient that peaks at protophloem sieve elements (PSE).

It localises to the nucleus. In terms of biological role, transcription factor that binds specifically to a 5'-AA[AG]G-3' consensus core sequence. Enhances the DNA binding of OBF transcription factors to OCS elements. Involved in the regulation of root development. The PEAR proteins (e.g. DOF2.4, DOF5.1, DOF3.2, DOF1.1, DOF5.6 and DOF5.3) activate gene expression that promotes radial growth of protophloem sieve elements. Element of a regulatory network controlling indole glucosinolates (IGS) biosynthesis, probably by inducing the expression of accurate genes (e.g. CYP83B1). Promotes apical dominance. This Arabidopsis thaliana (Mouse-ear cress) protein is Dof zinc finger protein DOF1.1.